Reading from the N-terminus, the 386-residue chain is MATTKSFLILIFMILATTSSTFAQLGEMVTVLSIDGGGIRGIIPATILEFLEGQLQEMDNNADARLADYFDVIGGTSTGGLLTAMISTPNENNRPFAAAKEIVPFYFEHGPQIFNPSGQILGPKYDGKYLMQVLQEKLGETRVHQALTEVVISSFDIKTNKPVIFTKSNLANSPELDAKMYDISYSTAAAPTYFPPHYFVTNTSNGDEYEFNLVDGAVATVADPALLSISVATRLAQKDPAFASIRSLNYKKMLLLSLGTGTTSEFDKTYTAKEAATWTAVHWMLVIQKMTDAASSYMTDYYLSTAFQALDSKNNYLRVQENALTGTTTEMDDASEANMELLVQVGENLLKKPVSEDNPETYEEALKRFAKLLSDRKKLRANKASY.

Positions Met1–Ala23 are cleaved as a signal peptide. Residues Leu32–Ile229 enclose the PNPLA domain. A GXGXXG motif is present at residues Gly36–Gly41. A GXSXG motif is present at residues Gly75 to Gly79. Residue Ser77 is the Nucleophile of the active site. Asn202 is a glycosylation site (N-linked (GlcNAc...) asparagine). The Proton acceptor role is filled by Asp215. A DGA/G motif is present at residues Asp215–Ala217. The stretch at Glu321 to Ala384 forms a coiled coil.

Belongs to the patatin family.

It is found in the vacuole. Its function is as follows. Non-specific lipolytic acyl hydrolase (LAH), an activity which is thought to be involved in the response of tubers to pathogens. Catalyzes the non-specific hydrolysis of phospholipids, glycolipids, sulfolipids, and mono- and diacylglycerols includng p-nitrophenyl caprate. Confers resistance to southern corn rootworm (SCRW). This Solanum cardiophyllum (Heartleaf nightshade) protein is Patatin-17.